A 687-amino-acid chain; its full sequence is DNA ligase (687 aa).

NAD(+)-binding positions include 34-38 (DAEYD), 83-84 (SL), and Glu-117. The active-site N6-AMP-lysine intermediate is Lys-119. Positions 140, 182, 298, and 322 each coordinate NAD(+). Cys-416, Cys-419, Cys-434, and Cys-439 together coordinate Zn(2+). A BRCT domain is found at 609–687 (EARGPFAGKT…EEEFVRLLKE (79 aa)).

This sequence belongs to the NAD-dependent DNA ligase family. LigA subfamily. The cofactor is Mg(2+). Requires Mn(2+) as cofactor.

The enzyme catalyses NAD(+) + (deoxyribonucleotide)n-3'-hydroxyl + 5'-phospho-(deoxyribonucleotide)m = (deoxyribonucleotide)n+m + AMP + beta-nicotinamide D-nucleotide.. Its function is as follows. DNA ligase that catalyzes the formation of phosphodiester linkages between 5'-phosphoryl and 3'-hydroxyl groups in double-stranded DNA using NAD as a coenzyme and as the energy source for the reaction. It is essential for DNA replication and repair of damaged DNA. The sequence is that of DNA ligase from Anaeromyxobacter dehalogenans (strain 2CP-C).